Here is a 451-residue protein sequence, read N- to C-terminus: Bifunctional protein GlmU (451 aa).

The tract at residues 1–229 is pyrophosphorylase; the sequence is MQRHAIILAA…FDEIIGVNDR (229 aa). UDP-N-acetyl-alpha-D-glucosamine-binding positions include 8 to 11, Lys-22, Gln-72, and 77 to 78; these read LAAG and GT. Residue Asp-102 participates in Mg(2+) binding. Positions 139, 154, and 227 each coordinate UDP-N-acetyl-alpha-D-glucosamine. Residue Asn-227 participates in Mg(2+) binding. The linker stretch occupies residues 230–250; the sequence is LMLSEAEKALQQRINRYHMEN. Residues 251–451 form an N-acetyltransferase region; it reads GVTIIDPSST…QVNKEGYLKK (201 aa). The UDP-N-acetyl-alpha-D-glucosamine site is built by Arg-332 and Lys-350. The active-site Proton acceptor is the His-362. Positions 365 and 376 each coordinate UDP-N-acetyl-alpha-D-glucosamine. Acetyl-CoA contacts are provided by residues 385–386, Ala-422, and Arg-439; that span reads NY.

The protein in the N-terminal section; belongs to the N-acetylglucosamine-1-phosphate uridyltransferase family. It in the C-terminal section; belongs to the transferase hexapeptide repeat family. Homotrimer. The cofactor is Mg(2+).

Its subcellular location is the cytoplasm. The catalysed reaction is alpha-D-glucosamine 1-phosphate + acetyl-CoA = N-acetyl-alpha-D-glucosamine 1-phosphate + CoA + H(+). It catalyses the reaction N-acetyl-alpha-D-glucosamine 1-phosphate + UTP + H(+) = UDP-N-acetyl-alpha-D-glucosamine + diphosphate. Its pathway is nucleotide-sugar biosynthesis; UDP-N-acetyl-alpha-D-glucosamine biosynthesis; N-acetyl-alpha-D-glucosamine 1-phosphate from alpha-D-glucosamine 6-phosphate (route II): step 2/2. The protein operates within nucleotide-sugar biosynthesis; UDP-N-acetyl-alpha-D-glucosamine biosynthesis; UDP-N-acetyl-alpha-D-glucosamine from N-acetyl-alpha-D-glucosamine 1-phosphate: step 1/1. It functions in the pathway bacterial outer membrane biogenesis; LPS lipid A biosynthesis. Functionally, catalyzes the last two sequential reactions in the de novo biosynthetic pathway for UDP-N-acetylglucosamine (UDP-GlcNAc). The C-terminal domain catalyzes the transfer of acetyl group from acetyl coenzyme A to glucosamine-1-phosphate (GlcN-1-P) to produce N-acetylglucosamine-1-phosphate (GlcNAc-1-P), which is converted into UDP-GlcNAc by the transfer of uridine 5-monophosphate (from uridine 5-triphosphate), a reaction catalyzed by the N-terminal domain. The sequence is that of Bifunctional protein GlmU from Staphylococcus epidermidis (strain ATCC 35984 / DSM 28319 / BCRC 17069 / CCUG 31568 / BM 3577 / RP62A).